A 393-amino-acid chain; its full sequence is Riboflavin biosynthesis protein RibBA (393 aa).

Residues 1-200 (MQFDTIELAI…IKSLVAFRKA (200 aa)) form a DHBP synthase region. D-ribulose 5-phosphate-binding positions include 27–28 (RE), D32, 139–143 (RNGHT), and E163. E28 is a Mg(2+) binding site. A Mg(2+)-binding site is contributed by H142. The GTP cyclohydrolase II stretch occupies residues 201–393 (VELNVNLKAK…TKKNKMGHLI (193 aa)). Residue 249-253 (RMHSA) coordinates GTP. Zn(2+)-binding residues include C254, C265, and C267. GTP-binding positions include Q270, 291–293 (EGR), and T313. Residue D325 is the Proton acceptor; for GTP cyclohydrolase activity of the active site. The active-site Nucleophile; for GTP cyclohydrolase activity is the R327. Residues S348 and K353 each coordinate GTP.

It in the N-terminal section; belongs to the DHBP synthase family. The protein in the C-terminal section; belongs to the GTP cyclohydrolase II family. Mg(2+) is required as a cofactor. It depends on Mn(2+) as a cofactor. Requires Zn(2+) as cofactor.

It catalyses the reaction D-ribulose 5-phosphate = (2S)-2-hydroxy-3-oxobutyl phosphate + formate + H(+). It carries out the reaction GTP + 4 H2O = 2,5-diamino-6-hydroxy-4-(5-phosphoribosylamino)-pyrimidine + formate + 2 phosphate + 3 H(+). It functions in the pathway cofactor biosynthesis; riboflavin biosynthesis; 2-hydroxy-3-oxobutyl phosphate from D-ribulose 5-phosphate: step 1/1. The protein operates within cofactor biosynthesis; riboflavin biosynthesis; 5-amino-6-(D-ribitylamino)uracil from GTP: step 1/4. Its function is as follows. Catalyzes the conversion of D-ribulose 5-phosphate to formate and 3,4-dihydroxy-2-butanone 4-phosphate. Catalyzes the conversion of GTP to 2,5-diamino-6-ribosylamino-4(3H)-pyrimidinone 5'-phosphate (DARP), formate and pyrophosphate. This chain is Riboflavin biosynthesis protein RibBA, found in Staphylococcus epidermidis (strain ATCC 35984 / DSM 28319 / BCRC 17069 / CCUG 31568 / BM 3577 / RP62A).